Reading from the N-terminus, the 53-residue chain is UPF0391 membrane protein ECA0470 (53 aa).

A run of 2 helical transmembrane segments spans residues 4-24 and 30-47; these read WGII…GGLA and AAKI…VSLF.

This sequence belongs to the UPF0391 family.

It is found in the cell membrane. The sequence is that of UPF0391 membrane protein ECA0470 from Pectobacterium atrosepticum (strain SCRI 1043 / ATCC BAA-672) (Erwinia carotovora subsp. atroseptica).